We begin with the raw amino-acid sequence, 705 residues long: Dynein axonemal intermediate chain 1 (705 aa).

Disordered regions lie at residues 1 to 44 (MPSK…AVRP) and 122 to 169 (AGSQ…DVPA). 2 positions are modified to phosphoserine: serine 124 and serine 127. The span at 124–135 (SQESVKVVTSDT) shows a compositional bias: polar residues. Acidic residues predominate over residues 136–159 (EILEEEEEPKEGEGEGEGEAEGEA). 5 WD repeats span residues 386 to 426 (SSES…SQPC), 435 to 478 (KHTD…LVHI), 543 to 583 (AHNM…PMFI), 585 to 625 (DLNA…YEAI), and 633 to 672 (KKKN…RKMP).

It belongs to the dynein intermediate chain family. In terms of assembly, consists of at least two heavy chains and a number of intermediate and light chains. Interacts with BICD2. Interacts with CFAP45 and CFAP52. Interacts with CFAP53.

It localises to the cytoplasm. The protein resides in the cytoskeleton. The protein localises to the cilium axoneme. Functionally, part of the dynein complex of respiratory cilia. This Rattus norvegicus (Rat) protein is Dynein axonemal intermediate chain 1 (Dnai1).